The primary structure comprises 190 residues: Hypoxanthine/guanine phosphoribosyltransferase (190 aa).

Belongs to the purine/pyrimidine phosphoribosyltransferase family. Archaeal HPRT subfamily. Homodimer.

It is found in the cytoplasm. The catalysed reaction is IMP + diphosphate = hypoxanthine + 5-phospho-alpha-D-ribose 1-diphosphate. The enzyme catalyses GMP + diphosphate = guanine + 5-phospho-alpha-D-ribose 1-diphosphate. The protein operates within purine metabolism; IMP biosynthesis via salvage pathway; IMP from hypoxanthine: step 1/1. Its function is as follows. Catalyzes a salvage reaction resulting in the formation of IMP that is energically less costly than de novo synthesis. The polypeptide is Hypoxanthine/guanine phosphoribosyltransferase (Methanobacterium lacus (strain AL-21)).